A 122-amino-acid polypeptide reads, in one-letter code: Large ribosomal subunit protein uL14 (122 aa).

Belongs to the universal ribosomal protein uL14 family. As to quaternary structure, part of the 50S ribosomal subunit. Forms a cluster with proteins L3 and L19. In the 70S ribosome, L14 and L19 interact and together make contacts with the 16S rRNA in bridges B5 and B8.

Functionally, binds to 23S rRNA. Forms part of two intersubunit bridges in the 70S ribosome. This chain is Large ribosomal subunit protein uL14, found in Shouchella clausii (strain KSM-K16) (Alkalihalobacillus clausii).